The primary structure comprises 4061 residues: Hybrid PKS-NRPS synthetase tasS (4061 aa).

The Ketosynthase family 3 (KS3) domain maps to 7–472 (QEPIAVIGMA…GTNAHAIIEG (466 aa)). The active site involves cysteine 180. The malonyl-CoA:ACP transacylase (MAT) domain stretch occupies residues 586–911 (VFTGQGAQWP…RQKNDVEELL (326 aa)). Residues 977–1113 (HPLLGRRCVE…ATVNVTFHEP (137 aa)) are N-terminal hotdog fold. Residues 977–1280 (HPLLGRRCVE…VRVQPFSVAG (304 aa)) form a dehydratase (DH) domain region. Residues 977 to 1282 (HPLLGRRCVE…VQPFSVAGPQ (306 aa)) form the PKS/mFAS DH domain. Histidine 1010 (proton acceptor; for dehydratase activity) is an active-site residue. The interval 1128 to 1282 (LANAEPQRLY…VQPFSVAGPQ (155 aa)) is C-terminal hotdog fold. The Proton donor; for dehydratase activity role is filled by aspartate 1188. Residues 1425–1619 (LDRFYEEGFE…GFNGVETHTP (195 aa)) form a methyltransferase (MT) domain region. The segment at 2153–2325 (TYFLLGLSGE…GVVGSDMAIG (173 aa)) is ketoreductase (KR) domain. One can recognise a Carrier 1 domain in the interval 2437 to 2516 (EAIKVVFDTF…LLVEEAVDKL (80 aa)). An O-(pantetheine 4'-phosphoryl)serine modification is found at serine 2475. The disordered stretch occupies residues 2527 to 2617 (EHGGEPDLTQ…QKHQEQTSQS (91 aa)). The span at 2556-2576 (TSAASSSDTGSDSSPTSNSVS) shows a compositional bias: low complexity. Residues 2577–2592 (ETQTGTPLETPMSTTE) show a composition bias toward polar residues. The condensation (C) domain stretch occupies residues 2632-3077 (QMTFGQNRFW…ELATWDTESE (446 aa)). The segment at 3103–3510 (QVIADHPDAV…RGYLTVEGRI (408 aa)) is adenylation (A) (KR) domain. Residues 3633-3712 (QNLTATERTL…SMAALLDDGV (80 aa)) form the Carrier 2 domain. Residue serine 3672 is modified to O-(pantetheine 4'-phosphoryl)serine. Residues 3813 to 3969 (DIDVVLHCAA…LSPLEDAVEA (157 aa)) are reductase (RED) domain.

It in the C-terminal section; belongs to the NRP synthetase family.

The enzyme catalyses (2S,4S)-4-hydroxy-4-methylglutamate + 8 malonyl-CoA + 3 S-adenosyl-L-methionine + ATP + 8 NADPH + 11 H(+) = (2S)-3-[(2S)-3,5-dioxo-4-[(2E,4R,6R,8E,10E,12E)-4,6,12-trimethyltetradeca-2,8,10,12-tetraenoyl]pyrrolidin-2-yl]-2-hydroxy-2-methylpropanoate + AMP + 3 S-adenosyl-L-homocysteine + 8 CO2 + diphosphate + 8 NADP(+) + 8 CoA + 6 H2O. The protein operates within secondary metabolite biosynthesis. Its function is as follows. Hybrid PKS-NRPS synthetase; part of the gene cluster that mediates the biosynthesis of the tetramic acids Sch210971 and Sch210972, potential anti-HIV fungal natural product that contain a decalin core. The PKS module of tasS together with the enoylreductase tasC catalyze the formation of the polyketide unit which is then conjugated to 4-hydroxyl-4-methyl glutamate (HMG) by the condensation domain of the tasS NRPS module. One unique structural feature of Sch210971 and Sch210972 is the tetramic acid motif proposed to be derived from the non-proteinogenic amino acid HMG, by a Dieckmann-type condensation catalyzed by the reductase domain of tasS. The aldolase tasA catalyzes the aldol condensation of 2 molecules of pyruvic acid to yield the intermediate 4-hydroxyl-4-methyl-2-oxoglutarate (HMOG), which can then be stereoselectively transaminated, may be by tasG, to form HMG. The Diels-Alderase tas3 then uses the Dieckmann product of tasS as substrate and catalyzes the Diels-Alder cycloaddition to form the decalin ring of Sch210971 and Sch210972. The polypeptide is Hybrid PKS-NRPS synthetase tasS (Hapsidospora irregularis).